Consider the following 532-residue polypeptide: Phosphate-import permease protein PhnE (532 aa).

A disordered region spans residues methionine 1 to lysine 20. 12 helical membrane-spanning segments follow: residues leucine 23–isoleucine 45, leucine 85–alanine 107, leucine 134–leucine 156, glycine 187–valine 209, leucine 216–glutamine 235, arginine 245–isoleucine 267, phenylalanine 287–leucine 304, valine 345–alanine 367, leucine 395–glycine 417, leucine 452–leucine 471, threonine 478–phenylalanine 495, and valine 505–isoleucine 527. An ABC transmembrane type-1 1 domain is found at alanine 81–alanine 264. Residues alanine 341–serine 524 enclose the ABC transmembrane type-1 2 domain.

Belongs to the binding-protein-dependent transport system permease family. In terms of assembly, the complex is composed of two ATP-binding proteins (PhnC), two transmembrane proteins (PhnE) and a solute-binding protein (PhnD).

The protein resides in the cell membrane. Its function is as follows. Part of the ABC transporter complex PhnCDE involved in phosphate import. Responsible for the translocation of the substrate across the membrane. In Mycolicibacterium smegmatis (strain ATCC 700084 / mc(2)155) (Mycobacterium smegmatis), this protein is Phosphate-import permease protein PhnE (phnE).